We begin with the raw amino-acid sequence, 355 residues long: Histidinol-phosphate aminotransferase (355 aa).

Lys218 is modified (N6-(pyridoxal phosphate)lysine).

Belongs to the class-II pyridoxal-phosphate-dependent aminotransferase family. Histidinol-phosphate aminotransferase subfamily. In terms of assembly, homodimer. The cofactor is pyridoxal 5'-phosphate.

It carries out the reaction L-histidinol phosphate + 2-oxoglutarate = 3-(imidazol-4-yl)-2-oxopropyl phosphate + L-glutamate. Its pathway is amino-acid biosynthesis; L-histidine biosynthesis; L-histidine from 5-phospho-alpha-D-ribose 1-diphosphate: step 7/9. The protein is Histidinol-phosphate aminotransferase of Chlorobaculum parvum (strain DSM 263 / NCIMB 8327) (Chlorobium vibrioforme subsp. thiosulfatophilum).